Here is a 166-residue protein sequence, read N- to C-terminus: Regulatory protein RecX (166 aa).

The protein belongs to the RecX family.

The protein localises to the cytoplasm. Its function is as follows. Modulates RecA activity. The protein is Regulatory protein RecX of Klebsiella pneumoniae (strain 342).